The primary structure comprises 178 residues: Bifunctional protein PyrR (178 aa).

The PRPP-binding motif lies at 97–109; sequence VVLVDDVLYTGRT.

This sequence belongs to the purine/pyrimidine phosphoribosyltransferase family. PyrR subfamily.

The catalysed reaction is UMP + diphosphate = 5-phospho-alpha-D-ribose 1-diphosphate + uracil. Functionally, regulates the transcription of the pyrimidine nucleotide (pyr) operon in response to exogenous pyrimidines. In terms of biological role, also displays a weak uracil phosphoribosyltransferase activity which is not physiologically significant. The polypeptide is Bifunctional protein PyrR (Herpetosiphon aurantiacus (strain ATCC 23779 / DSM 785 / 114-95)).